We begin with the raw amino-acid sequence, 527 residues long: Heat shock factor protein HSF8 (527 aa).

The DNA-binding element occupies 39 to 133; it reads PFLVKTYDMV…KSISRRKPAH (95 aa). Disordered stretches follow at residues 128–158, 241–273, and 297–341; these read RRKPAHGHAQQQQQPHGNAQQQMQPPGHSAS, NESNKRIAEGSKKRRIKQDIESQDPSVTPADGQ, and SSPR…TSGK. Low complexity predominate over residues 134-152; sequence GHAQQQQQPHGNAQQQMQP. Over residues 317–326 the composition is skewed to polar residues; it reads SPQSNASSGR.

This sequence belongs to the HSF family. In terms of assembly, homotrimer. Exhibits temperature-dependent phosphorylation.

It is found in the nucleus. Its function is as follows. DNA-binding protein that specifically binds heat shock promoter elements (HSE) and activates transcription. The chain is Heat shock factor protein HSF8 (HSF8) from Solanum lycopersicum (Tomato).